The sequence spans 457 residues: MDHLPIFCQLRDRDCLIVGGGDVAERKARLLLDAGARLTVNALAFIPQFTAWADAGMLTLVEGPFDESLLDTCWLAIAATDDDALNQRVSEAAESRRIFCNVVDAPKAASFIMPSIIDRSPLMVAVSSGGTSPVLARLLREKLESLLPLHLGQVAKYAGQLRGRVKQQFATMGERRRFWEKLFVNDRLAQSLANNDQKAITETTEQLINEPLDHRGEVVLVGAGPGDAGLLTLKGLQQIQQADVVVYDRLVSDDIMNLVRRDADRVFVGKRAGYHCVPQEEINQILLREAQKGKRVVRLKGGDPFIFGRGGEELETLCNAGIPFSVVPGITAASGCSAYSGIPLTHRDYAQSVRLITGHLKTGGELDWENLAAEKQTLVFYMGLNQAATIQQKLIEHGMPGEMPVAIVENGTAVTQRVIDGTLTQLGELAQQMNSPSLIIIGRVVGLRDKLNWFSNH.

Residues 1 to 204 (MDHLPIFCQL…NDQKAITETT (204 aa)) are precorrin-2 dehydrogenase /sirohydrochlorin ferrochelatase. NAD(+) is bound by residues 22 to 23 (DV) and 43 to 44 (LA). A Phosphoserine modification is found at Ser-128. The tract at residues 216-457 (GEVVLVGAGP…RDKLNWFSNH (242 aa)) is uroporphyrinogen-III C-methyltransferase. Pro-225 is a binding site for S-adenosyl-L-methionine. The active-site Proton acceptor is Asp-248. Lys-270 (proton donor) is an active-site residue. S-adenosyl-L-methionine contacts are provided by residues 301–303 (GGD), Ile-306, 331–332 (TA), Met-382, and Gly-411.

It in the N-terminal section; belongs to the precorrin-2 dehydrogenase / sirohydrochlorin ferrochelatase family. In the C-terminal section; belongs to the precorrin methyltransferase family.

It catalyses the reaction uroporphyrinogen III + 2 S-adenosyl-L-methionine = precorrin-2 + 2 S-adenosyl-L-homocysteine + H(+). The catalysed reaction is precorrin-2 + NAD(+) = sirohydrochlorin + NADH + 2 H(+). It carries out the reaction siroheme + 2 H(+) = sirohydrochlorin + Fe(2+). The protein operates within cofactor biosynthesis; adenosylcobalamin biosynthesis; precorrin-2 from uroporphyrinogen III: step 1/1. It participates in cofactor biosynthesis; adenosylcobalamin biosynthesis; sirohydrochlorin from precorrin-2: step 1/1. Its pathway is porphyrin-containing compound metabolism; siroheme biosynthesis; precorrin-2 from uroporphyrinogen III: step 1/1. It functions in the pathway porphyrin-containing compound metabolism; siroheme biosynthesis; siroheme from sirohydrochlorin: step 1/1. The protein operates within porphyrin-containing compound metabolism; siroheme biosynthesis; sirohydrochlorin from precorrin-2: step 1/1. Functionally, multifunctional enzyme that catalyzes the SAM-dependent methylations of uroporphyrinogen III at position C-2 and C-7 to form precorrin-2 via precorrin-1. Then it catalyzes the NAD-dependent ring dehydrogenation of precorrin-2 to yield sirohydrochlorin. Finally, it catalyzes the ferrochelation of sirohydrochlorin to yield siroheme. In Escherichia coli O7:K1 (strain IAI39 / ExPEC), this protein is Siroheme synthase.